We begin with the raw amino-acid sequence, 474 residues long: A-type ATP synthase subunit B (474 aa).

The protein belongs to the ATPase alpha/beta chains family. In terms of assembly, has multiple subunits with at least A(3), B(3), C, D, E, F, H, I and proteolipid K(x).

The protein localises to the cell membrane. Functionally, component of the A-type ATP synthase that produces ATP from ADP in the presence of a proton gradient across the membrane. The B chain is a regulatory subunit. This is A-type ATP synthase subunit B from Halorubrum lacusprofundi (strain ATCC 49239 / DSM 5036 / JCM 8891 / ACAM 34).